Here is a 472-residue protein sequence, read N- to C-terminus: Tubulin gamma chain (472 aa).

142–148 (AGGTGSG) is a binding site for GTP.

Belongs to the tubulin family.

Its subcellular location is the cytoplasm. The protein localises to the cytoskeleton. It is found in the microtubule organizing center. Its function is as follows. Tubulin is the major constituent of microtubules. The gamma chain is found at microtubule organizing centers (MTOC) such as the spindle poles, suggesting that it is involved in the minus-end nucleation of microtubule assembly. The sequence is that of Tubulin gamma chain (TUBG) from Anemia phyllitidis (Fern).